The primary structure comprises 297 residues: Transcription factor PCF8 (297 aa).

The interval 1 to 22 is disordered; that stretch reads MEEVVGGGKERKRPRGALVGVG. Positions 46–104 constitute a TCP domain; that stretch reads GKDRHSKVVTSRGLRDRRVRLSVPTAIAFYDIQDRLGVDQPSKAIEWLIRAAAAAIDAL. Disordered regions lie at residues 116 to 136 and 273 to 297; these read AASS…SETS and AAPA…ERKT. The segment covering 282-297 has biased composition (basic and acidic residues); it reads GERRLQLWDFKEERKT.

As to quaternary structure, forms homodimers and heterodimers.

It is found in the nucleus. Transcription activator. Binds the promoter core sequence 5'-GGNCC-3'. This Oryza sativa subsp. indica (Rice) protein is Transcription factor PCF8 (PCF8).